We begin with the raw amino-acid sequence, 620 residues long: 1-deoxy-D-xylulose-5-phosphate synthase (620 aa).

Thiamine diphosphate-binding positions include histidine 80 and 121–123 (GHS). Position 152 (aspartate 152) interacts with Mg(2+). Residues 153-154 (GA), asparagine 181, tyrosine 288, and glutamate 370 contribute to the thiamine diphosphate site. A Mg(2+)-binding site is contributed by asparagine 181.

This sequence belongs to the transketolase family. DXPS subfamily. In terms of assembly, homodimer. The cofactor is Mg(2+). Thiamine diphosphate is required as a cofactor.

The enzyme catalyses D-glyceraldehyde 3-phosphate + pyruvate + H(+) = 1-deoxy-D-xylulose 5-phosphate + CO2. It functions in the pathway metabolic intermediate biosynthesis; 1-deoxy-D-xylulose 5-phosphate biosynthesis; 1-deoxy-D-xylulose 5-phosphate from D-glyceraldehyde 3-phosphate and pyruvate: step 1/1. In terms of biological role, catalyzes the acyloin condensation reaction between C atoms 2 and 3 of pyruvate and glyceraldehyde 3-phosphate to yield 1-deoxy-D-xylulose-5-phosphate (DXP). This Enterobacter sp. (strain 638) protein is 1-deoxy-D-xylulose-5-phosphate synthase.